The primary structure comprises 494 residues: Protein transport protein Sec61 subunit alpha (494 aa).

A run of 10 helical transmembrane segments spans residues 36-56, 79-99, 122-142, 147-167, 177-197, 249-269, 294-314, 359-379, 426-446, and 450-470; these read LWTS…LYGI, LMEL…LLAG, LLGI…GMYG, LGAG…IIVI, YGIG…SIVW, LLAT…QVEL, MPII…QILY, IVSD…SCAL, AAFG…MGAI, and TGIL…LLAV.

This sequence belongs to the SecY/SEC61-alpha family. Heterotrimeric complex composed of SEC61-alpha, SEC61-beta and SEC61-gamma.

It is found in the endoplasmic reticulum membrane. Its function is as follows. Appears to play a crucial role in the insertion of secretory and membrane polypeptides into the ER. It is required for assembly of membrane and secretory proteins. In Pyrenomonas salina, this protein is Protein transport protein Sec61 subunit alpha.